The following is a 361-amino-acid chain: UDP-3-O-acylglucosamine N-acyltransferase (361 aa).

The Proton acceptor role is filled by His-253.

Belongs to the transferase hexapeptide repeat family. LpxD subfamily. Homotrimer.

The enzyme catalyses a UDP-3-O-[(3R)-3-hydroxyacyl]-alpha-D-glucosamine + a (3R)-hydroxyacyl-[ACP] = a UDP-2-N,3-O-bis[(3R)-3-hydroxyacyl]-alpha-D-glucosamine + holo-[ACP] + H(+). The protein operates within bacterial outer membrane biogenesis; LPS lipid A biosynthesis. Catalyzes the N-acylation of UDP-3-O-acylglucosamine using 3-hydroxyacyl-ACP as the acyl donor. Is involved in the biosynthesis of lipid A, a phosphorylated glycolipid that anchors the lipopolysaccharide to the outer membrane of the cell. The chain is UDP-3-O-acylglucosamine N-acyltransferase from Burkholderia pseudomallei (strain 1710b).